A 194-amino-acid chain; its full sequence is Adenylate kinase isoenzyme 1 (194 aa).

The residue at position 1 (Met-1) is an N-acetylmethionine. Residue 18 to 23 (GSGKGT) coordinates ATP. The residue at position 38 (Ser-38) is a Phosphoserine. The tract at residues 38–67 (STGDLLRAEVSSGSARGKKLSEIMEKGQLV) is NMP. Residues Thr-39, Arg-44, 65 to 67 (QLV), 94 to 97 (GYPR), and Gln-101 contribute to the AMP site. An LID region spans residues 131–141 (KRGETSGRVDD). Arg-132 provides a ligand contact to ATP. Positions 138 and 149 each coordinate AMP. Residue Gly-177 coordinates ATP.

This sequence belongs to the adenylate kinase family. AK1 subfamily. In terms of assembly, monomer. Mg(2+) is required as a cofactor.

It is found in the cytoplasm. The catalysed reaction is a ribonucleoside 5'-phosphate + ATP = a ribonucleoside 5'-diphosphate + ADP. It carries out the reaction AMP + ATP = 2 ADP. It catalyses the reaction dAMP + ATP = dADP + ADP. The enzyme catalyses dATP + AMP = dADP + ADP. The catalysed reaction is dAMP + dATP = 2 dADP. It carries out the reaction a 2'-deoxyribonucleoside 5'-diphosphate + ATP = a 2'-deoxyribonucleoside 5'-triphosphate + ADP. It catalyses the reaction a ribonucleoside 5'-diphosphate + ATP = a ribonucleoside 5'-triphosphate + ADP. The enzyme catalyses CDP + GTP = CTP + GDP. The catalysed reaction is GDP + ATP = GTP + ADP. It carries out the reaction UDP + ATP = UTP + ADP. It catalyses the reaction GTP + UDP = UTP + GDP. The enzyme catalyses dTDP + GTP = dTTP + GDP. The catalysed reaction is dCDP + GTP = dCTP + GDP. It carries out the reaction dGDP + ATP = dGTP + ADP. It catalyses the reaction dADP + GTP = dATP + GDP. The enzyme catalyses thiamine diphosphate + ADP = thiamine triphosphate + AMP. Catalyzes the reversible transfer of the terminal phosphate group between ATP and AMP. Also displays broad nucleoside diphosphate kinase activity. Plays an important role in cellular energy homeostasis and in adenine nucleotide metabolism. Also catalyzes at a very low rate the synthesis of thiamine triphosphate (ThTP) from thiamine diphosphate (ThDP) and ADP. This is Adenylate kinase isoenzyme 1 from Oryctolagus cuniculus (Rabbit).